An 865-amino-acid chain; its full sequence is Alanine--tRNA ligase (865 aa).

Zn(2+) is bound by residues His554, His558, Cys656, and His660.

It belongs to the class-II aminoacyl-tRNA synthetase family. Zn(2+) is required as a cofactor.

The protein resides in the cytoplasm. It catalyses the reaction tRNA(Ala) + L-alanine + ATP = L-alanyl-tRNA(Ala) + AMP + diphosphate. Functionally, catalyzes the attachment of alanine to tRNA(Ala) in a two-step reaction: alanine is first activated by ATP to form Ala-AMP and then transferred to the acceptor end of tRNA(Ala). Also edits incorrectly charged Ser-tRNA(Ala) and Gly-tRNA(Ala) via its editing domain. The polypeptide is Alanine--tRNA ligase (Idiomarina loihiensis (strain ATCC BAA-735 / DSM 15497 / L2-TR)).